A 226-amino-acid polypeptide reads, in one-letter code: 7-cyano-7-deazaguanine synthase (226 aa).

8–18 (ISGGLDSTTCL) is a binding site for ATP. Zn(2+) is bound by residues C188, C198, C201, and C204.

Belongs to the QueC family. Zn(2+) serves as cofactor.

It carries out the reaction 7-carboxy-7-deazaguanine + NH4(+) + ATP = 7-cyano-7-deazaguanine + ADP + phosphate + H2O + H(+). The protein operates within purine metabolism; 7-cyano-7-deazaguanine biosynthesis. In terms of biological role, catalyzes the ATP-dependent conversion of 7-carboxy-7-deazaguanine (CDG) to 7-cyano-7-deazaguanine (preQ(0)). This chain is 7-cyano-7-deazaguanine synthase, found in Coxiella burnetii (strain RSA 493 / Nine Mile phase I).